Reading from the N-terminus, the 257-residue chain is Aspartate/glutamate leucyltransferase (257 aa).

It belongs to the R-transferase family. Bpt subfamily.

It is found in the cytoplasm. The enzyme catalyses N-terminal L-glutamyl-[protein] + L-leucyl-tRNA(Leu) = N-terminal L-leucyl-L-glutamyl-[protein] + tRNA(Leu) + H(+). It catalyses the reaction N-terminal L-aspartyl-[protein] + L-leucyl-tRNA(Leu) = N-terminal L-leucyl-L-aspartyl-[protein] + tRNA(Leu) + H(+). Functionally, functions in the N-end rule pathway of protein degradation where it conjugates Leu from its aminoacyl-tRNA to the N-termini of proteins containing an N-terminal aspartate or glutamate. The polypeptide is Aspartate/glutamate leucyltransferase (Nitrobacter winogradskyi (strain ATCC 25391 / DSM 10237 / CIP 104748 / NCIMB 11846 / Nb-255)).